The sequence spans 350 residues: Type II restriction enzyme NgoBI (350 aa).

The enzyme catalyses Endonucleolytic cleavage of DNA to give specific double-stranded fragments with terminal 5'-phosphates.. Its function is as follows. A P subtype restriction enzyme that recognizes the double-stranded sequence 5'-RGCGCY-3'; the cleavage site is unknown. This Neisseria gonorrhoeae protein is Type II restriction enzyme NgoBI (ngoBIR).